Here is a 479-residue protein sequence, read N- to C-terminus: Sulfate adenylyltransferase subunit 1 (479 aa).

The region spanning 25-239 (KSLLRFLTCG…EVLETVDIQR (215 aa)) is the tr-type G domain. Residues 34-41 (GSVDDGKS) are G1. 34-41 (GSVDDGKS) provides a ligand contact to GTP. Residues 92–96 (GITID) are G2. The segment at 113-116 (DTPG) is G3. GTP-binding positions include 113-117 (DTPGH) and 168-171 (NKMD). The G4 stretch occupies residues 168-171 (NKMD). The tract at residues 206-208 (SAL) is G5.

This sequence belongs to the TRAFAC class translation factor GTPase superfamily. Classic translation factor GTPase family. CysN/NodQ subfamily. Heterodimer composed of CysD, the smaller subunit, and CysN.

The enzyme catalyses sulfate + ATP + H(+) = adenosine 5'-phosphosulfate + diphosphate. Its pathway is sulfur metabolism; hydrogen sulfide biosynthesis; sulfite from sulfate: step 1/3. Its function is as follows. With CysD forms the ATP sulfurylase (ATPS) that catalyzes the adenylation of sulfate producing adenosine 5'-phosphosulfate (APS) and diphosphate, the first enzymatic step in sulfur assimilation pathway. APS synthesis involves the formation of a high-energy phosphoric-sulfuric acid anhydride bond driven by GTP hydrolysis by CysN coupled to ATP hydrolysis by CysD. The protein is Sulfate adenylyltransferase subunit 1 of Salmonella paratyphi B (strain ATCC BAA-1250 / SPB7).